The primary structure comprises 430 residues: C-terminal-binding protein 1 (430 aa).

Positions 1–59 (MSGVRPPIMNGPMHPRPLVALLDGRDCTVEMPILKDVATVAFCDAQSTQEIHEKVLNEA) are interaction with GLIS2 1. Residues S89, 169–174 (IGLGRV), D193, 226–232 (CGLNEHN), 253–255 (TAR), and D279 contribute to the NAD(+) site. The active site involves R255. The tract at residues 277-349 (ALDVHESEPF…VNKDHLTAAT (73 aa)) is interaction with GLIS2 2. E284 is an active-site residue. S289 carries the post-translational modification Phosphoserine. H304 functions as the Proton donor in the catalytic mechanism. The disordered stretch occupies residues 398 to 430 (SHGLPPVAHPPHAPSPGQTVKPEADRDHTTDQL). A Phosphoserine modification is found at S412. Residue K418 forms a Glycyl lysine isopeptide (Lys-Gly) (interchain with G-Cter in SUMO) linkage. A compositionally biased stretch (basic and acidic residues) spans 419–430 (PEADRDHTTDQL).

It belongs to the D-isomer specific 2-hydroxyacid dehydrogenase family. Homo- or heterodimer. Heterodimer with CTBP2. Interacts with ELK3 (via its PXDLS motif). Interacts with RBBP8 (via its PXDLS motif); the interaction is disrupted by binding to adenovirus E1A. Interacts with PNN, MECOM and ZFHX1B. Interacts with ZNF366 (via PXDLS motif). Interaction with SATB1 (non-acetylated form); the interaction stabilizes its attachment to DNA and promotes transcription repression. Interacts with PRDM16; the interaction represses white adipose tissue (WAT)-specific genes expression. Interacts with GLIS2, HIPK2, FOXP1, FOXP2, HDAC4, HDAC5, HDAC9, NRIP1 and WIZ. Interacts with ZNF217. Interacts with BCL6; the interaction is required for BCL6 transcriptional autoinhibition and inhibition of some BCL6 target genes. Interacts with IKZF4. Interacts with MCRIP1 (unphosphorylated form, via the PXDLS motif); competitively inhibiting CTBP-ZEB1 interaction. Interacts with Bassoon/BSN; this interaction targets and anchors CTBP1 to presynapses. Interacts with SIMC1. It depends on NAD(+) as a cofactor. Post-translationally, the level of phosphorylation appears to be regulated during the cell cycle. Phosphorylation by HIPK2 on Ser-412 induces proteasomal degradation. In terms of processing, ADP-ribosylated; when cells are exposed to brefeldin A. Sumoylation on Lys-418 is promoted by the E3 SUMO-protein ligase CBX4.

The protein localises to the cytoplasm. It is found in the nucleus. It localises to the synapse. Its subcellular location is the synaptosome. In terms of biological role, corepressor targeting diverse transcription regulators such as GLIS2 or BCL6. Has dehydrogenase activity. Involved in controlling the equilibrium between tubular and stacked structures in the Golgi complex. Functions in brown adipose tissue (BAT) differentiation. The protein is C-terminal-binding protein 1 (Ctbp1) of Rattus norvegicus (Rat).